The sequence spans 369 residues: Flagellar P-ring protein (369 aa).

A signal peptide spans 1 to 23; sequence MIKQFAVSLLLVLLTLVTTTASA.

It belongs to the FlgI family. As to quaternary structure, the basal body constitutes a major portion of the flagellar organelle and consists of four rings (L,P,S, and M) mounted on a central rod.

It is found in the periplasm. It localises to the bacterial flagellum basal body. In terms of biological role, assembles around the rod to form the L-ring and probably protects the motor/basal body from shearing forces during rotation. The chain is Flagellar P-ring protein from Photorhabdus laumondii subsp. laumondii (strain DSM 15139 / CIP 105565 / TT01) (Photorhabdus luminescens subsp. laumondii).